The chain runs to 262 residues: Acyl-[acyl-carrier-protein]--UDP-N-acetylglucosamine O-acyltransferase (262 aa).

Belongs to the transferase hexapeptide repeat family. LpxA subfamily. Homotrimer.

It is found in the cytoplasm. The catalysed reaction is a (3R)-hydroxyacyl-[ACP] + UDP-N-acetyl-alpha-D-glucosamine = a UDP-3-O-[(3R)-3-hydroxyacyl]-N-acetyl-alpha-D-glucosamine + holo-[ACP]. It participates in glycolipid biosynthesis; lipid IV(A) biosynthesis; lipid IV(A) from (3R)-3-hydroxytetradecanoyl-[acyl-carrier-protein] and UDP-N-acetyl-alpha-D-glucosamine: step 1/6. In terms of biological role, involved in the biosynthesis of lipid A, a phosphorylated glycolipid that anchors the lipopolysaccharide to the outer membrane of the cell. This chain is Acyl-[acyl-carrier-protein]--UDP-N-acetylglucosamine O-acyltransferase, found in Burkholderia vietnamiensis (strain G4 / LMG 22486) (Burkholderia cepacia (strain R1808)).